A 55-amino-acid polypeptide reads, in one-letter code: Glycine-rich antimicrobial peptide Pg-AMP (55 aa).

The span at 18-39 (GYGGYGGGRYGGGYGSGRGQPV) shows a compositional bias: gly residues. Positions 18-55 (GYGGYGGGRYGGGYGSGRGQPVGQGVERSHDDNRNQPR) are disordered. The span at 44–55 (ERSHDDNRNQPR) shows a compositional bias: basic and acidic residues.

In terms of assembly, monomer and homodimer. Might act by homodimer formation.

Has antibacterial activity against the Gram-negative bacteria Klebsiella sp., Proteus sp., E.coli ATCC 8739 (MIC=72 ug/ml) and K.pneumoniae (MIC=32 ug/ml). Has no activity against the Gram-negative bacterium S.typhimurium or the Gram-positive bacterium S.aureus. Does not have antifungal activity against the human and plant pathogenic fungi F.oxysporum, A.fumigatus and R.solani. The protein is Glycine-rich antimicrobial peptide Pg-AMP of Psidium guajava (Guava).